The primary structure comprises 491 residues: MISKQEYQAQAAQGYNRIPLVQELLADLDTPLSLYLKLANRPYTYLLESVVGGERFGRYSFIGLPCSHYLKASGKHVDVYQNGEIVEQHDGNPLPFIEAFHNRFKTPEIPSLPRFTGGLVGYFGYETIYNFEHFAHRLKNTTKADPLGTPDILLMLSQELAVVDNLSGKIYLIVYADPSQPDGYERARERLEDIRTQLRQSCAIPLSLGSKHTEAVSEFGEEPFKACVNKIKDYIFAGDCMQVVPSQRMSMEFTDSSLALYRALRTLNPSPYLFYYDFGDFHIVGSSPEILVRRERDDVIVRPIAGTRLRGKTPAEDLANEQDLLSDAKEIAEHVMLIDLGRNDVGRISKTGEVKVTDKMVIEKYSHVMHIVSNVEGRLKDGMTNMDILAATFPAGTLSGAPKVRAMEIIEEVEPSKRGIYGGAVGVWGFNNDMDLAIAIRTAVVKNNTLYVQSGAGVVADSDPASEWQETQNKARAVIHAAQMVQEGLDK.

Residues serine 49 and 271–273 (PYL) contribute to the L-tryptophan site. Residue 306–307 (GT) coordinates chorismate. Glutamate 333 is a Mg(2+) binding site. Chorismate is bound by residues tyrosine 421, arginine 441, 455-457 (GAG), and glycine 457. Position 470 (glutamate 470) interacts with Mg(2+).

The protein belongs to the anthranilate synthase component I family. In terms of assembly, heterotetramer consisting of two non-identical subunits: a beta subunit (TrpG) and a large alpha subunit (TrpE). Mg(2+) is required as a cofactor.

The enzyme catalyses chorismate + L-glutamine = anthranilate + pyruvate + L-glutamate + H(+). Its pathway is amino-acid biosynthesis; L-tryptophan biosynthesis; L-tryptophan from chorismate: step 1/5. Its activity is regulated as follows. Feedback inhibited by tryptophan. Part of a heterotetrameric complex that catalyzes the two-step biosynthesis of anthranilate, an intermediate in the biosynthesis of L-tryptophan. In the first step, the glutamine-binding beta subunit (TrpG) of anthranilate synthase (AS) provides the glutamine amidotransferase activity which generates ammonia as a substrate that, along with chorismate, is used in the second step, catalyzed by the large alpha subunit of AS (TrpE) to produce anthranilate. In the absence of TrpG, TrpE can synthesize anthranilate directly from chorismate and high concentrations of ammonia. The protein is Anthranilate synthase component 1 (trpE) of Neisseria meningitidis serogroup C / serotype 2a (strain ATCC 700532 / DSM 15464 / FAM18).